The chain runs to 242 residues: Glutamine transport ATP-binding protein GlnQ (242 aa).

One can recognise an ABC transporter domain in the interval 2 to 236 (ITFQNVNKHY…PKEERARLFL (235 aa)). Residue 34 to 41 (GPSGSGKS) coordinates ATP.

This sequence belongs to the ABC transporter superfamily. The complex is composed of two ATP-binding proteins (GlnQ), two transmembrane proteins (GlnM and GlnP) and a solute-binding protein (GlnH).

It is found in the cell membrane. In terms of biological role, part of the ABC transporter complex GlnHMPQ involved in glutamine transport. Probably responsible for energy coupling to the transport system. This is Glutamine transport ATP-binding protein GlnQ (glnQ) from Bacillus subtilis (strain 168).